We begin with the raw amino-acid sequence, 443 residues long: Xaa-Pro dipeptidase (443 aa).

Residues Asp-246, Asp-257, His-339, Glu-384, and Glu-423 each contribute to the Mn(2+) site.

This sequence belongs to the peptidase M24B family. Bacterial-type prolidase subfamily. Mn(2+) serves as cofactor.

The catalysed reaction is Xaa-L-Pro dipeptide + H2O = an L-alpha-amino acid + L-proline. In terms of biological role, splits dipeptides with a prolyl residue in the C-terminal position. The protein is Xaa-Pro dipeptidase of Shigella boydii serotype 18 (strain CDC 3083-94 / BS512).